We begin with the raw amino-acid sequence, 184 residues long: Protein Syd (184 aa).

This sequence belongs to the Syd family.

Its subcellular location is the cell inner membrane. In terms of biological role, interacts with the SecY protein in vivo. May bind preferentially to an uncomplexed state of SecY, thus functioning either as a chelating agent for excess SecY in the cell or as a regulatory factor that negatively controls the translocase function. This Edwardsiella ictaluri (strain 93-146) protein is Protein Syd.